Reading from the N-terminus, the 117-residue chain is Large ribosomal subunit protein bL19 (117 aa).

Belongs to the bacterial ribosomal protein bL19 family.

This protein is located at the 30S-50S ribosomal subunit interface and may play a role in the structure and function of the aminoacyl-tRNA binding site. The chain is Large ribosomal subunit protein bL19 from Alkaliphilus metalliredigens (strain QYMF).